We begin with the raw amino-acid sequence, 1058 residues long: SIT4-associating protein SAP185 (1058 aa).

A Glycyl lysine isopeptide (Lys-Gly) (interchain with G-Cter in ubiquitin) cross-link involves residue lysine 20. Disordered stretches follow at residues 34 to 71 (TSTE…NREE), 135 to 202 (SEDR…ELEE), 513 to 556 (NSQN…TSID), 818 to 862 (CQEE…DQEQ), 873 to 892 (TKTR…VPGE), and 934 to 992 (ELSD…HDYD). The segment covering 42-55 (DSNSTDESLESNSF) has biased composition (polar residues). Basic and acidic residues-rich tracts occupy residues 135–146 (SEDRDLVRGEDK) and 153–175 (ENAK…TRSG). The span at 176–189 (EEEELENEENDSAS) shows a compositional bias: acidic residues. The span at 190–202 (EDTRVTLPHELEE) shows a compositional bias: basic and acidic residues. Composition is skewed to acidic residues over residues 528–546 (ENED…DDTN) and 820–837 (EEEE…EDEP). Positions 838 to 861 (QEYRNGDSVRSKESNSSEGKRDQE) are enriched in basic and acidic residues. Residues 934 to 963 (ELSDGWESSPSNSIPKRASPSKNGMNSPMF) show a composition bias toward polar residues. Residues 967 to 991 (FELHSPTDEFGGHKDEILSAEGHDY) show a composition bias toward basic and acidic residues.

It belongs to the SAPS family. In terms of processing, hyperphosphorylated in the absence of SIT4.

Functionally, associates with the SIT4 phosphatase in a cell cycle dependent manner. May be directly or indirectly involved in SIT4-dependent functions in budding and in normal G1 cyclin expression. This chain is SIT4-associating protein SAP185 (SAP185), found in Saccharomyces cerevisiae (strain ATCC 204508 / S288c) (Baker's yeast).